The primary structure comprises 161 residues: MSLLRVTRSSGHLSAVCRLPARSISTTSILLVPSNEGNKPPTPMIDLEDKSLPIPIYKEKKNEPLQLQKSRLLYQSRKRGMLENGLLLSTFAAKHLESMDVKQTKLYDQLINMPTNDWDIFYWATGVKPTPAEYDNEIMALLKDHVKNANREKRICQPNLY.

The N-terminal 31 residues, Met-1–Leu-31, are a transit peptide targeting the mitochondrion.

It belongs to the SDHAF2 family. In terms of assembly, interacts with the flavoprotein subunit within the SDH catalytic dimer.

The protein localises to the mitochondrion matrix. Functionally, plays an essential role in the assembly of succinate dehydrogenase (SDH), an enzyme complex (also referred to as respiratory complex II) that is a component of both the tricarboxylic acid (TCA) cycle and the mitochondrial electron transport chain, and which couples the oxidation of succinate to fumarate with the reduction of ubiquinone (coenzyme Q) to ubiquinol. Required for flavinylation (covalent attachment of FAD) of the flavoprotein subunit of the SDH catalytic dimer. This chain is Succinate dehydrogenase assembly factor 2, mitochondrial, found in Aedes aegypti (Yellowfever mosquito).